The following is a 366-amino-acid chain: Homeobox-leucine zipper protein HOX21 (366 aa).

2 disordered regions span residues 25-81 (QQAA…SSAQ) and 94-132 (MLGK…EKKR). Positions 36–48 (HHHHHHHGHHGHH) are enriched in basic residues. Residues 62 to 74 (GPPPPPPPHPHNP) are compositionally biased toward pro residues. A compositionally biased stretch (gly residues) spans 103-115 (GDGGGGGDEVNGG). The homeobox DNA-binding region spans 127 to 186 (AGEKKRRLNVEQVRTLEKNFELGNKLEPERKMQLARALGLQPRQVAIWFQNRRARWKTKQ). Residues 185–229 (KQLEKDYDALKRQLDAVKAENDALLNHNKKLQAEIVALKGREAAS) form a leucine-zipper region. 2 disordered regions span residues 239 to 287 (EASC…GGGG) and 312 to 336 (LHSS…VQAA). The span at 240 to 252 (ASCSNRSENSSEI) shows a compositional bias: polar residues.

The protein belongs to the HD-ZIP homeobox family. Class I subfamily. In terms of tissue distribution, expressed in seedlings, roots, stems, leaf blades and panicles.

Its subcellular location is the nucleus. Its function is as follows. Probable transcription factor. The protein is Homeobox-leucine zipper protein HOX21 (HOX21) of Oryza sativa subsp. japonica (Rice).